We begin with the raw amino-acid sequence, 284 residues long: NAD kinase (284 aa).

Catalysis depends on Asp60, which acts as the Proton acceptor. NAD(+) contacts are provided by residues Asp60–Gly61, Asn134–Asp135, Arg145, Lys162, Asp164, Thr175–Ser180, and Gln234.

The protein belongs to the NAD kinase family. It depends on a divalent metal cation as a cofactor.

The protein localises to the cytoplasm. The catalysed reaction is NAD(+) + ATP = ADP + NADP(+) + H(+). In terms of biological role, involved in the regulation of the intracellular balance of NAD and NADP, and is a key enzyme in the biosynthesis of NADP. Catalyzes specifically the phosphorylation on 2'-hydroxyl of the adenosine moiety of NAD to yield NADP. The polypeptide is NAD kinase (Clostridium beijerinckii (strain ATCC 51743 / NCIMB 8052) (Clostridium acetobutylicum)).